A 228-amino-acid polypeptide reads, in one-letter code: UPF0173 metal-dependent hydrolase BLi03080/BL00413 (228 aa).

The protein belongs to the UPF0173 family.

The polypeptide is UPF0173 metal-dependent hydrolase BLi03080/BL00413 (Bacillus licheniformis (strain ATCC 14580 / DSM 13 / JCM 2505 / CCUG 7422 / NBRC 12200 / NCIMB 9375 / NCTC 10341 / NRRL NRS-1264 / Gibson 46)).